The primary structure comprises 236 residues: 2,3,4,5-tetrahydropyridine-2,6-dicarboxylate N-acetyltransferase (236 aa).

It belongs to the transferase hexapeptide repeat family. DapH subfamily.

The enzyme catalyses (S)-2,3,4,5-tetrahydrodipicolinate + acetyl-CoA + H2O = L-2-acetamido-6-oxoheptanedioate + CoA. It functions in the pathway amino-acid biosynthesis; L-lysine biosynthesis via DAP pathway; LL-2,6-diaminopimelate from (S)-tetrahydrodipicolinate (acetylase route): step 1/3. Catalyzes the transfer of an acetyl group from acetyl-CoA to tetrahydrodipicolinate. The sequence is that of 2,3,4,5-tetrahydropyridine-2,6-dicarboxylate N-acetyltransferase from Clostridium beijerinckii (strain ATCC 51743 / NCIMB 8052) (Clostridium acetobutylicum).